The primary structure comprises 406 residues: Protease ElaD (406 aa).

The active site involves His-234. Residue Cys-316 is the Nucleophile of the active site.

The protein belongs to the peptidase C79 family.

Its function is as follows. Protease that can act as an efficient and specific deubiquitinating enzyme in vitro. Does not possess desumoylating and deneddylating activities. The physiological substrate is unknown. The sequence is that of Protease ElaD (elaD) from Escherichia coli O139:H28 (strain E24377A / ETEC).